A 340-amino-acid polypeptide reads, in one-letter code: L-threonine 3-dehydrogenase (340 aa).

Zn(2+) is bound at residue Cys-38. Residues Thr-40 and His-43 each act as charge relay system in the active site. Positions 63, 64, 93, 96, 99, and 107 each coordinate Zn(2+). NAD(+) contacts are provided by residues Ile-175, Asp-195, Arg-200, 262–264 (LGI), and 286–287 (IY).

Belongs to the zinc-containing alcohol dehydrogenase family. In terms of assembly, homotetramer. Zn(2+) is required as a cofactor.

It localises to the cytoplasm. It carries out the reaction L-threonine + NAD(+) = (2S)-2-amino-3-oxobutanoate + NADH + H(+). It participates in amino-acid degradation; L-threonine degradation via oxydo-reductase pathway; glycine from L-threonine: step 1/2. Functionally, catalyzes the NAD(+)-dependent oxidation of L-threonine to 2-amino-3-ketobutyrate. The protein is L-threonine 3-dehydrogenase of Legionella pneumophila (strain Corby).